A 397-amino-acid chain; its full sequence is Argininosuccinate synthase (397 aa).

ATP is bound at residue 9–17 (AYSGGLDTS). Y86 provides a ligand contact to L-citrulline. G116 contributes to the ATP binding site. Residues T118, N122, and D123 each contribute to the L-aspartate site. Residue N122 participates in L-citrulline binding. L-citrulline is bound by residues R126, S174, E259, and Y271.

It belongs to the argininosuccinate synthase family. Type 1 subfamily. In terms of assembly, homotetramer.

It localises to the cytoplasm. It catalyses the reaction L-citrulline + L-aspartate + ATP = 2-(N(omega)-L-arginino)succinate + AMP + diphosphate + H(+). It functions in the pathway amino-acid biosynthesis; L-arginine biosynthesis; L-arginine from L-ornithine and carbamoyl phosphate: step 2/3. In Lactococcus lactis subsp. cremoris (strain MG1363), this protein is Argininosuccinate synthase.